Consider the following 185-residue polypeptide: Probable calcium-binding protein CML10 (185 aa).

Positions 1 to 41 (MVKIKMPALFRRRSGSKSPPLPQADPASGGGSPAPTPEEEM) are disordered. EF-hand domains are found at residues 36–71 (TPEEEMERVFRKFDANGDGRISRSELGALFESLGHA), 72–107 (ATDDELARMMAEADADGDGFISLDEFAALNATASGD), 110–145 (AVEEDLRHAFRVFDADGNGTISAAELARVLHGLGEK), and 146–181 (ATVQQCRRMIEGVDQNGDGLISFEEFKVMMAGGGSF). 18 residues coordinate Ca(2+): Asp-49, Asn-51, Asp-53, Arg-55, Glu-60, Asp-85, Asp-87, Asp-89, Glu-96, Asp-123, Asp-125, Asn-127, Thr-129, Glu-134, Asp-159, Asn-161, Asp-163, and Glu-170.

Its function is as follows. Potential calcium sensor. The protein is Probable calcium-binding protein CML10 (CML10) of Oryza sativa subsp. japonica (Rice).